Reading from the N-terminus, the 225-residue chain is Cytochrome c oxidase subunit 2 (225 aa).

Topologically, residues 1-25 are mitochondrial intermembrane; sequence MSTWFMFMFQESNSYYADNLISFHN. Residues 26–47 traverse the membrane as a helical segment; sequence MVMMIIIMISTLTVYIILDLFM. Residues 48 to 62 lie on the Mitochondrial matrix side of the membrane; the sequence is NKFSNLFLLKNHNIE. The helical transmembrane segment at 63 to 82 threads the bilayer; it reads IIWTIIPIIILLIICFPSLK. The Mitochondrial intermembrane segment spans residues 83–225; sequence ILYLIDEIVN…YFLNWVNKQI (143 aa). Cu cation-binding residues include histidine 159, cysteine 194, glutamate 196, cysteine 198, histidine 202, and methionine 205. Glutamate 196 provides a ligand contact to Mg(2+).

The protein belongs to the cytochrome c oxidase subunit 2 family. As to quaternary structure, component of the cytochrome c oxidase (complex IV, CIV), a multisubunit enzyme composed of a catalytic core of 3 subunits and several supernumerary subunits. The complex exists as a monomer or a dimer and forms supercomplexes (SCs) in the inner mitochondrial membrane with ubiquinol-cytochrome c oxidoreductase (cytochrome b-c1 complex, complex III, CIII). Cu cation serves as cofactor.

The protein localises to the mitochondrion inner membrane. The enzyme catalyses 4 Fe(II)-[cytochrome c] + O2 + 8 H(+)(in) = 4 Fe(III)-[cytochrome c] + 2 H2O + 4 H(+)(out). Component of the cytochrome c oxidase, the last enzyme in the mitochondrial electron transport chain which drives oxidative phosphorylation. The respiratory chain contains 3 multisubunit complexes succinate dehydrogenase (complex II, CII), ubiquinol-cytochrome c oxidoreductase (cytochrome b-c1 complex, complex III, CIII) and cytochrome c oxidase (complex IV, CIV), that cooperate to transfer electrons derived from NADH and succinate to molecular oxygen, creating an electrochemical gradient over the inner membrane that drives transmembrane transport and the ATP synthase. Cytochrome c oxidase is the component of the respiratory chain that catalyzes the reduction of oxygen to water. Electrons originating from reduced cytochrome c in the intermembrane space (IMS) are transferred via the dinuclear copper A center (CU(A)) of subunit 2 and heme A of subunit 1 to the active site in subunit 1, a binuclear center (BNC) formed by heme A3 and copper B (CU(B)). The BNC reduces molecular oxygen to 2 water molecules using 4 electrons from cytochrome c in the IMS and 4 protons from the mitochondrial matrix. This chain is Cytochrome c oxidase subunit 2 (COII), found in Apis mellifera ligustica (Common honeybee).